The following is a 151-amino-acid chain: Ribosome maturation factor RimP (151 aa).

The protein belongs to the RimP family.

The protein resides in the cytoplasm. In terms of biological role, required for maturation of 30S ribosomal subunits. This chain is Ribosome maturation factor RimP, found in Haemophilus influenzae (strain 86-028NP).